The following is a 403-amino-acid chain: Argininosuccinate synthase (403 aa).

ATP is bound by residues 12 to 20 (AYSGGLDTS) and Ala-39. Tyr-91 contacts L-citrulline. Gly-121 is a binding site for ATP. Positions 123, 127, and 128 each coordinate L-aspartate. Asn-127 lines the L-citrulline pocket. Positions 131, 180, 189, 265, and 277 each coordinate L-citrulline.

It belongs to the argininosuccinate synthase family. Type 1 subfamily. In terms of assembly, homotetramer.

The protein resides in the cytoplasm. It catalyses the reaction L-citrulline + L-aspartate + ATP = 2-(N(omega)-L-arginino)succinate + AMP + diphosphate + H(+). Its pathway is amino-acid biosynthesis; L-arginine biosynthesis; L-arginine from L-ornithine and carbamoyl phosphate: step 2/3. The sequence is that of Argininosuccinate synthase from Buchnera aphidicola subsp. Acyrthosiphon pisum (strain 5A).